A 1097-amino-acid chain; its full sequence is Kinesin-like protein KIF1C (1097 aa).

The region spanning 5 to 347 (SVKVAVRVRP…LRYADRTKQI (343 aa)) is the Kinesin motor domain. 96-103 (GQTGAGKS) lines the ATP pocket. Position 294 is a phosphoserine (serine 294). Residues 358-380 (NARLIRELQEEVARLRELLMAQG) are a coiled coil. Positions 397-434 (GGVLPAASSPPAPASPSSPPPHNGELEPSFSPSAEPQI) are disordered. Residues 404-418 (SSPPAPASPSSPPPH) are compositionally biased toward pro residues. Positions 437-478 (EEAMERLQETEKIIAELNETWEEKLRKTEALRMEREALLAEM) form a coiled coil. Phosphoserine is present on serine 491. An FHA domain is found at 520–587 (TRVGQVDVDI…LKSGNRIVMG (68 aa)). Positions 630–671 (EQQGIDIKLEMEKRLQDLENQYRKEKEEADLLLEQQRLYADS) form a coiled coil. Serine 671 and serine 673 each carry phosphoserine. The stretch at 824–868 (AEVEDLRAHIDKLTGILQEVKLQNSSKDRELQALRDRMLRMERVI) forms a coiled coil. Disordered regions lie at residues 897 to 921 (EAVSNDHSPAVRPSSPPQSSWERVS) and 946 to 1097 (QGLQ…GAAV). Serine 911 is modified (phosphoserine). Over residues 949-958 (QGSGGRGGGL) the composition is skewed to gly residues. The span at 997–1015 (GPQPPEEVTAPPPPPNRRP) shows a compositional bias: pro residues. Residues 1016–1026 (PSPRRPHRPRR) are compositionally biased toward basic residues. The residue at position 1028 (serine 1028) is a Phosphoserine. The residue at position 1036 (arginine 1036) is an Omega-N-methylarginine. The segment covering 1059–1077 (QPQPYPAQRPGPRYPPYTT) has biased composition (pro residues). Residue threonine 1077 is modified to Phosphothreonine. Phosphoserine is present on serine 1086. Residues 1086-1097 (SAPDLKESGAAV) show a composition bias toward basic and acidic residues.

This sequence belongs to the TRAFAC class myosin-kinesin ATPase superfamily. Kinesin family. Unc-104 subfamily.

It is found in the cytoplasm. It localises to the cytoskeleton. Functionally, probable motor protein. In Rattus norvegicus (Rat), this protein is Kinesin-like protein KIF1C (Kif1c).